The following is a 357-amino-acid chain: GDP-mannose transporter 2 (357 aa).

The Cytoplasmic portion of the chain corresponds to 1–33 (MASARNGVSKDELLPVYERRSQRDGDISGSVKS). Residues 34–54 (FASTIGNSASAAVLAYCLSSI) form a helical membrane-spanning segment. Residues 55-68 (SMTLVNKYVVSGAS) are Lumenal-facing. A helical membrane pass occupies residues 69-89 (WNLSFLYLAMQSFIGTVAILA). The Cytoplasmic portion of the chain corresponds to 90–107 (CKKTGLIQNLALFDLKKA). Residues 108-128 (QTWLPISLLLVGMIYTGNKAL) traverse the membrane as a helical segment. Position 129 (Gln-129) is a topological domain, lumenal. A helical membrane pass occupies residues 130–150 (FLSVPVYTIFKNLTIIVIAYG). Residues 151–161 (EVLMVGGGVKP) lie on the Cytoplasmic side of the membrane. The chain crosses the membrane as a helical span at residues 162–181 (LALLSFGLMVLSSVVAAWAD). The Lumenal portion of the chain corresponds to 182-196 (IQNATTATVGASSDS). Asn-184 is a glycosylation site (N-linked (GlcNAc...) asparagine). Residues 197–217 (TAAALSALNAGYAWMGTNVIF) traverse the membrane as a helical segment. At 218 to 236 (SASYALGMRRVIKKTNFDN) the chain is on the cytoplasmic side. Residues 237–257 (WDVMFYNNLLSIPILLLASVL) form a helical membrane-spanning segment. The Lumenal segment spans residues 258–277 (AEDWSSENLQRNFPAELRQS). Residues 278–298 (LFIGILYSGVAAVFISYCTAW) form a helical membrane-spanning segment. At 299–306 (CVRATSST) the chain is on the cytoplasmic side. The chain crosses the membrane as a helical span at residues 307–327 (TYAMVGALNKLPLAVAGIVFF). At 328–332 (AAPVT) the chain is on the lumenal side. Residues 333–352 (FGSVSAIVLGFISGLVYARA) form a helical membrane-spanning segment. Over 353–357 (KSTGA) the chain is Cytoplasmic.

It belongs to the TPT transporter family. SLC35D subfamily. Homooligomer.

The protein resides in the golgi apparatus membrane. It is found in the cytoplasmic vesicle membrane. It localises to the endoplasmic reticulum membrane. In terms of biological role, involved in the import of GDP-mannose from the cytoplasm into the Golgi lumen. The sequence is that of GDP-mannose transporter 2 (gmt2) from Neosartorya fischeri (strain ATCC 1020 / DSM 3700 / CBS 544.65 / FGSC A1164 / JCM 1740 / NRRL 181 / WB 181) (Aspergillus fischerianus).